A 79-amino-acid chain; its full sequence is Sec-independent protein translocase protein TatA (79 aa).

The helical transmembrane segment at 1–21 threads the bilayer; sequence MFSGISIWQLLILLAIVVLLF. Composition is skewed to basic and acidic residues over residues 44–58 and 66–79; these read MKDG…RLAD and QDAE…KDKA. Residues 44–79 are disordered; it reads MKDGEDEQDHKRLADDDQPQNKQDAEQKAEQEKDKA.

This sequence belongs to the TatA/E family. In terms of assembly, the Tat system comprises two distinct complexes: a TatABC complex, containing multiple copies of TatA, TatB and TatC subunits, and a separate TatA complex, containing only TatA subunits. Substrates initially bind to the TatABC complex, which probably triggers association of the separate TatA complex to form the active translocon.

The protein localises to the cell inner membrane. Functionally, part of the twin-arginine translocation (Tat) system that transports large folded proteins containing a characteristic twin-arginine motif in their signal peptide across membranes. TatA could form the protein-conducting channel of the Tat system. The chain is Sec-independent protein translocase protein TatA from Alcanivorax borkumensis (strain ATCC 700651 / DSM 11573 / NCIMB 13689 / SK2).